Here is a 288-residue protein sequence, read N- to C-terminus: Aminoglycoside N(3)-acetyltransferase VII (288 aa).

This sequence belongs to the antibiotic N-acetyltransferase family.

It catalyses the reaction a 2-deoxystreptamine antibiotic + acetyl-CoA = an N(3)-acetyl-2-deoxystreptamine antibiotic + CoA + H(+). Resistance to paromomycin. This Streptomyces paromomycinus (Streptomyces rimosus subsp. paromomycinus) protein is Aminoglycoside N(3)-acetyltransferase VII (aacC7).